We begin with the raw amino-acid sequence, 514 residues long: Cytochrome P450 monooxygenase ptmQ (514 aa).

A helical transmembrane segment spans residues 3-23; the sequence is YVAQSPWIATLIVTATTYCTL. Asn-148 is a glycosylation site (N-linked (GlcNAc...) asparagine). Position 452 (Cys-452) interacts with heme. A glycan (N-linked (GlcNAc...) asparagine) is linked at Asn-486.

The protein belongs to the cytochrome P450 family. The cofactor is heme.

It is found in the membrane. Its pathway is secondary metabolite biosynthesis. Functionally, cytochrome P450 monooxygenase; part of the gene cluster that mediates the biosynthesis of the indole diterpenes penitrems. The geranylgeranyl diphosphate (GGPP) synthase ptmG catalyzes the first step in penitrem biosynthesis via conversion of farnesyl pyrophosphate and isopentyl pyrophosphate into geranylgeranyl pyrophosphate (GGPP). Condensation of indole-3-glycerol phosphate with GGPP by the prenyl transferase ptmC then forms 3-geranylgeranylindole (3-GGI). Epoxidation by the FAD-dependent monooxygenase ptmM leads to a epoxidized-GGI that is substrate of the terpene cyclase ptmB for cyclization to yield paspaline. Paspaline is subsequently converted to 13-desoxypaxilline by the cytochrome P450 monooxygenase ptmP, the latter being then converted to paxilline by the cytochrome P450 monooxygenase ptmQ. Paxilline is converted to beta-paxitriol via C-10 ketoreduction by the short-chain dehydrogenase ptmH which can be monoprenylated at the C-20 by the indole diterpene prenyltransferase ptmD. A two-step elimination (acetylation and elimination) process performed by the O-acetyltransferase ptmV and ptmI leads to the production of the prenylated form of penijanthine. The FAD-linked oxidoreductase ptmO then converts the prenylated form of penijanthine into PC-M5 which is in turn transformed into PC-M4 by the aromatic dimethylallyltransferase ptmE. Five sequential oxidative transformations performed by the cytochrome P450 monooxygenases ptmK, ptmU, ptmL, ptmN and ptmJ yield the various penitrem compounds. PtmK, ptmU and ptmM are involved in the formation of the key bicyclic ring of penitrem C via the formation of the intermediates secopenitrem D and penitrem D. PtmL catalyzes the epoxidation of penitrem D and C to yield penitrem B and F, respectively. PtmJ catalyzes the last benzylic hydroxylation to convert penitrem B to prenitrem E and penitrem F to penitrem A. The protein is Cytochrome P450 monooxygenase ptmQ of Penicillium ochrochloron.